The sequence spans 53 residues: UPF0391 membrane protein BURPS1106A_A2993 (53 aa).

2 helical membrane-spanning segments follow: residues 5–25 and 30–50; these read ALIF…GIAA and IAKI…VLGV.

The protein belongs to the UPF0391 family.

Its subcellular location is the cell membrane. This Burkholderia pseudomallei (strain 1106a) protein is UPF0391 membrane protein BURPS1106A_A2993.